The following is a 415-amino-acid chain: Tyrosine--tRNA ligase (415 aa).

Y33 serves as a coordination point for L-tyrosine. Positions 38–47 (PSGESLHLGN) match the 'HIGH' region motif. 2 residues coordinate L-tyrosine: Y161 and Q165. A 'KMSKS' region motif is present at residues 225–229 (KFGKS). ATP is bound at residue K228. One can recognise an S4 RNA-binding domain in the interval 350–414 (MVIDFLLQAK…KKNYFIVVWK (65 aa)).

Belongs to the class-I aminoacyl-tRNA synthetase family. TyrS type 1 subfamily. Homodimer.

Its subcellular location is the cytoplasm. It catalyses the reaction tRNA(Tyr) + L-tyrosine + ATP = L-tyrosyl-tRNA(Tyr) + AMP + diphosphate + H(+). In terms of biological role, catalyzes the attachment of tyrosine to tRNA(Tyr) in a two-step reaction: tyrosine is first activated by ATP to form Tyr-AMP and then transferred to the acceptor end of tRNA(Tyr). This is Tyrosine--tRNA ligase from Mycoplasmoides gallisepticum (strain R(low / passage 15 / clone 2)) (Mycoplasma gallisepticum).